A 704-amino-acid polypeptide reads, in one-letter code: E3 ubiquitin-protein ligase MBR1 (704 aa).

Disordered stretches follow at residues 1–20, 37–61, 176–197, 245–354, 381–403, and 436–525; these read MNPMQGPRSIGGSSTEVNQV, NPADTGFPNNSTPSGRPTYASSSSH, SSLGSSVQAAGESSSGPASPFG, LSLA…GENQ, SNPSGIGMPAERLGPQWETPRSN, and SLFV…RHRR. A compositionally biased stretch (polar residues) spans 43-61; it reads FPNNSTPSGRPTYASSSSH. Composition is skewed to low complexity over residues 184 to 196 and 245 to 255; these read AAGESSSGPASPF and LSLATPSQSSP. 3 stretches are compositionally biased toward polar residues: residues 281–290, 300–329, and 340–354; these read FHSTRNTDTL, RQPQESVAFSVSHGGTSVRPTGSLQQNLPL, and RSSSITSGSNTGENQ. Residues 452 to 467 are compositionally biased toward pro residues; it reads QPNPTWIPPQNAPPHN. The span at 485-505 shows a compositional bias: low complexity; the sequence is SPSASHGGPLPLLPAGPSVSS. An RING-type; atypical zinc finger spans residues 656–697; that stretch reads CCICQEEYVEGDNLGTLKCGHEFHKDCIKQWVMIKNLCPICK.

The protein belongs to the RING-type zinc finger family. In terms of assembly, interacts with MED25 and UBC11.

The catalysed reaction is S-ubiquitinyl-[E2 ubiquitin-conjugating enzyme]-L-cysteine + [acceptor protein]-L-lysine = [E2 ubiquitin-conjugating enzyme]-L-cysteine + N(6)-ubiquitinyl-[acceptor protein]-L-lysine.. Its pathway is protein modification; protein ubiquitination. Its function is as follows. E3 ubiquitin-protein ligase that functions as a regulator of MED25 stability by targeting MED25 for degradation in a RING-H2-dependent way. Proteasome-dependent degradation of MED25 seems to activate its function as positive regulator of FLOWERING LOCUS T (FT) and is important to induce the expression of FT and consequently to promote flowering. The protein is E3 ubiquitin-protein ligase MBR1 (MBR1) of Arabidopsis thaliana (Mouse-ear cress).